We begin with the raw amino-acid sequence, 62 residues long: UPF0434 protein Avi_4243 (62 aa).

It belongs to the UPF0434 family.

This Allorhizobium ampelinum (strain ATCC BAA-846 / DSM 112012 / S4) (Agrobacterium vitis (strain S4)) protein is UPF0434 protein Avi_4243.